The primary structure comprises 166 residues: Interferon gamma (166 aa).

Positions 1–23 (MNYTSFILAFQLCAILGSSTYYC) are cleaved as a signal peptide. Glutamine 24 bears the Pyrrolidone carboxylic acid mark. Asparagine 39 and asparagine 106 each carry an N-linked (GlcNAc...) asparagine glycan. The tract at residues 147-166 (ANLRKRKRSQNPFRGRRALQ) is disordered. Positions 148-166 (NLRKRKRSQNPFRGRRALQ) are enriched in basic residues.

The protein belongs to the type II (or gamma) interferon family. In terms of assembly, homodimer. Interacts with IFNGR1 (via extracellular domain); this interaction promotes IFNGR1 dimerization. Released primarily from activated T lymphocytes.

The protein resides in the secreted. Type II interferon produced by immune cells such as T-cells and NK cells that plays crucial roles in antimicrobial, antiviral, and antitumor responses by activating effector immune cells and enhancing antigen presentation. Primarily signals through the JAK-STAT pathway after interaction with its receptor IFNGR1 to affect gene regulation. Upon IFNG binding, IFNGR1 intracellular domain opens out to allow association of downstream signaling components JAK2, JAK1 and STAT1, leading to STAT1 activation, nuclear translocation and transcription of IFNG-regulated genes. Many of the induced genes are transcription factors such as IRF1 that are able to further drive regulation of a next wave of transcription. Plays a role in class I antigen presentation pathway by inducing a replacement of catalytic proteasome subunits with immunoproteasome subunits. In turn, increases the quantity, quality, and repertoire of peptides for class I MHC loading. Increases the efficiency of peptide generation also by inducing the expression of activator PA28 that associates with the proteasome and alters its proteolytic cleavage preference. Up-regulates as well MHC II complexes on the cell surface by promoting expression of several key molecules such as cathepsins B/CTSB, H/CTSH, and L/CTSL. Participates in the regulation of hematopoietic stem cells during development and under homeostatic conditions by affecting their development, quiescence, and differentiation. The polypeptide is Interferon gamma (IFNG) (Equus asinus (Donkey)).